We begin with the raw amino-acid sequence, 725 residues long: DNA replication licensing factor MCM7 (725 aa).

One can recognise an MCM domain in the interval 333 to 538 (IYNKLARSLA…METDLEMARH (206 aa)). 383 to 390 (GDPGVAKS) lines the ATP pocket. The Arginine finger motif lies at 515–518 (SRFD).

This sequence belongs to the MCM family. Component of the minichromosome maintenance (MCM) complex, a heterotetramer composed of MCM2, MCM3, MCM4, MCM5, MCM6 and MCM7.

It localises to the nucleus. The enzyme catalyses ATP + H2O = ADP + phosphate + H(+). Probable component of the MCM2-7 complex (MCM complex) that may function as a DNA helicase and which is essential to undergo a single round of replication initiation and elongation per cell cycle in eukaryotic cells. This chain is DNA replication licensing factor MCM7 (MCM7), found in Oryza sativa subsp. indica (Rice).